A 299-amino-acid chain; its full sequence is N-acetylaspartate synthetase (299 aa).

A compositionally biased stretch (pro residues) spans 44 to 57 (AAPGPAAAPPPAAG). Positions 44–70 (AAPGPAAAPPPAAGPQPHGGTGGAGPP) are disordered. Residues 60–70 (PHGGTGGAGPP) are compositionally biased toward gly residues. The helical transmembrane segment at 118 to 138 (YALLAALCFAVTRSLLLTCLV) threads the bilayer. The region spanning 143–280 (LALRYYYSRK…VLPGMTLSLA (138 aa)) is the N-acetyltransferase domain.

Belongs to the NAT8 family. In terms of tissue distribution, expressed in brain, kidney, liver and spleen. In brain, present in neurons but not in astrocytes (at protein level). Expressed in brain, thymus and spleen.

The protein localises to the cytoplasm. The protein resides in the microsome membrane. It is found in the mitochondrion membrane. It localises to the endoplasmic reticulum membrane. It carries out the reaction L-aspartate + acetyl-CoA = N-acetyl-L-aspartate + CoA + H(+). Its activity is regulated as follows. Aminooxyacetic acid (AOAA) blocks its activity in both cytoplasm and mitochondria. Catalyzes the synthesis of N-acetylaspartate acid (NAA) from L-aspartate and acetyl-CoA. Promotes dopamine uptake by regulating TNF-alpha expression. Attenuates methamphetamine-induced inhibition of dopamine uptake. The polypeptide is N-acetylaspartate synthetase (Nat8l) (Mus musculus (Mouse)).